We begin with the raw amino-acid sequence, 328 residues long: Cytochrome c biogenesis protein CcsA (328 aa).

Transmembrane regions (helical) follow at residues 13 to 33, 46 to 66, 73 to 93, 101 to 121, 146 to 166, 234 to 254, 263 to 283, and 295 to 315; these read ISFS…LVNL, GIVI…IYSG, LYES…VSYF, LNAI…SGLL, MVLG…LLVI, IISL…VWAN, WDPK…YLHI, and AIVA…VNLL.

The protein belongs to the CcmF/CycK/Ccl1/NrfE/CcsA family. As to quaternary structure, may interact with Ccs1.

Its subcellular location is the plastid. It localises to the chloroplast thylakoid membrane. Its function is as follows. Required during biogenesis of c-type cytochromes (cytochrome c6 and cytochrome f) at the step of heme attachment. The polypeptide is Cytochrome c biogenesis protein CcsA (Aethionema cordifolium (Lebanon stonecress)).